Consider the following 102-residue polypeptide: Matrix Gla protein (102 aa).

Residues serine 2, serine 3, and serine 5 each carry the phosphoserine modification. The disordered stretch occupies residues 18–45; the sequence is DANSFMRQPRPPNHWDSRDRFKSPRERT. The Gla domain maps to 27–73; it reads RPPNHWDSRDRFKSPRERTREKCEEYRPCERLARQVGLKRAYGKYFG. A compositionally biased stretch (basic and acidic residues) spans 30 to 45; that stretch reads NHWDSRDRFKSPRERT. 4 positions are modified to 4-carboxyglutamate: glutamate 43, glutamate 47, glutamate 50, and glutamate 51. Cysteine 49 and cysteine 55 are oxidised to a cystine. The interval 72–102 is disordered; sequence FGNRRQRPSTSGRLRPRKYRASRYRNHHYRY. Positions 85–102 are enriched in basic residues; sequence LRPRKYRASRYRNHHYRY.

This sequence belongs to the osteocalcin/matrix Gla protein family. Post-translationally, requires vitamin K-dependent gamma-carboxylation for its function. In terms of tissue distribution, accounts for 35-40% of the total protein in the acid demineralization extract of calcified cartilage.

It localises to the secreted. Associates with the organic matrix of calcified cartilage. The sequence is that of Matrix Gla protein (mgp) from Galeorhinus galeus (Tope shark).